The primary structure comprises 581 residues: uncharacterized protein (581 aa).

S28 carries the post-translational modification Phosphoserine. 11 helical membrane passes run 61–81, 100–120, 125–145, 187–207, 214–234, 340–360, 382–402, 426–446, 458–478, 486–506, and 522–542; these read LVLI…AGSA, AGVL…ATFL, CVYL…ALVK, IYIL…GYIA, WIGW…LFTF, IFLF…DAWL, AVAI…IYGG, LWLM…FGIG, VGLG…MAYL, VLEA…VFTF, and ISIG…ILCG.

Belongs to the major facilitator superfamily.

The protein resides in the cytoplasm. Its subcellular location is the cell cortex. The protein localises to the membrane. This is an uncharacterized protein from Schizosaccharomyces pombe (strain 972 / ATCC 24843) (Fission yeast).